We begin with the raw amino-acid sequence, 36 residues long: FTDGLMKNGNFELAPKPEDMXGTVRVESLKAVKYXD.

Post-translationally, N-glycosylated.

In Actinidia deliciosa (Kiwi), this protein is Allergen Act d 3.